The primary structure comprises 435 residues: Trigger factor (435 aa).

The PPIase FKBP-type domain maps to 162 to 247; sequence GDRVIIDFKG…VKNVAEATLP (86 aa).

This sequence belongs to the FKBP-type PPIase family. Tig subfamily.

It is found in the cytoplasm. It carries out the reaction [protein]-peptidylproline (omega=180) = [protein]-peptidylproline (omega=0). Functionally, involved in protein export. Acts as a chaperone by maintaining the newly synthesized protein in an open conformation. Functions as a peptidyl-prolyl cis-trans isomerase. The polypeptide is Trigger factor (Chromobacterium violaceum (strain ATCC 12472 / DSM 30191 / JCM 1249 / CCUG 213 / NBRC 12614 / NCIMB 9131 / NCTC 9757 / MK)).